Consider the following 66-residue polypeptide: Large ribosomal subunit protein bL33c (66 aa).

Belongs to the bacterial ribosomal protein bL33 family.

The protein resides in the plastid. It is found in the chloroplast. This Fagopyrum esculentum subsp. ancestrale (Wild buckwheat) protein is Large ribosomal subunit protein bL33c.